A 219-amino-acid polypeptide reads, in one-letter code: Peptidyl-tRNA hydrolase (219 aa).

Tyr26 is a tRNA binding site. His31 serves as the catalytic Proton acceptor. TRNA-binding residues include Tyr78, Asn80, and Asn126.

This sequence belongs to the PTH family. As to quaternary structure, monomer.

It localises to the cytoplasm. It catalyses the reaction an N-acyl-L-alpha-aminoacyl-tRNA + H2O = an N-acyl-L-amino acid + a tRNA + H(+). Its function is as follows. Hydrolyzes ribosome-free peptidyl-tRNAs (with 1 or more amino acids incorporated), which drop off the ribosome during protein synthesis, or as a result of ribosome stalling. Catalyzes the release of premature peptidyl moieties from peptidyl-tRNA molecules trapped in stalled 50S ribosomal subunits, and thus maintains levels of free tRNAs and 50S ribosomes. This is Peptidyl-tRNA hydrolase from Trichodesmium erythraeum (strain IMS101).